The chain runs to 698 residues: Topoisomerase subunit TopoN (698 aa).

Residue Lys429 forms an Isoglutamyl lysine isopeptide (Lys-Gln) (interchain with Q-Cter in protein Pup) linkage. Positions 443-473 (GAKARARAASKAKGLGTNLSLPPKLLPSRES) are disordered. The Toprim domain occupies 479-593 (AELFLCEGDS…AGMVYVTMPP (115 aa)).

Belongs to the type II topoisomerase family. In terms of assembly, a complex of TopoN and TopoM, possibly a heterotetramer. Mg(2+) serves as cofactor.

The catalysed reaction is ATP-dependent breakage, passage and rejoining of double-stranded DNA.. Inhibited by quinolone antibiotic ciprofloxacin and coumarin antibiotic novobiocin, but at much higher concentrations than is usual for DNA gyrase/topoisomerase. Catalyzes the relaxation of negatively supercoiled DNA in the presence of ATP or dATP but not other nucleotides. Individual subunits have no activity. Not able to negatively supercoil DNA, it can however introduce positive supercoils in DNA. Relaxes positive supercoils in an ATP-dependent manner. Catenates and decatenates DNA. Generates dsDNA breaks in the presence of the quinolone antibiotic ciprofloxacin, showing it is a topoisomerase. The protein is Topoisomerase subunit TopoN of Mycolicibacterium smegmatis (strain ATCC 700084 / mc(2)155) (Mycobacterium smegmatis).